Here is a 508-residue protein sequence, read N- to C-terminus: MLWFQGAIPAAIATAKRSGAVFVVFVAGDDEQSTQMAASWEDDKVTEASSNSFVAIKIDTKSEACLQFSQIYPVVCVPSSFFIGDSGIPLEVIAGSVSADELVTRIHKVRQMHLLKSETSVANGSQSESSVSTPSASFEPNNTCENSQSRNAELCEIPPTSDTKSDTATGGESAGHATSSQEPSGCSDQRPAEDLNIRVERLTKKLEERREEKRKEEEQREIKKEIERRKTGKEMLDYKRKQEEELTKRMLEERNREKAEDRAARERIKQQIALDRAERAARFAKTKEEVEAAKAAALLAKQAEMEVKRESYARERSTVARIQFRLPDGSSFTNQFPSDAPLEEARQFAAQTVGNTYGNFSLATMFPRREFTKEDYKKKLLDLELAPSASVVLLPAGRPTASIVHSSSGDIWTLLGTVLYPFLAIWRLISNFLFSNPPPTQTSVRVTSSEPPNPASSSKSEKREPVRKRVLEKRGDDFKKEGKIYRLRTQDDGEDENNTWNGNSTQQM.

The interaction with UBQLN1 stretch occupies residues 1–200; that stretch reads MLWFQGAIPA…PAEDLNIRVE (200 aa). At 1-413 the chain is on the cytoplasmic side; sequence MLWFQGAIPA…VHSSSGDIWT (413 aa). Composition is skewed to polar residues over residues 117–151 and 160–187; these read SETSVANGSQSESSVSTPSASFEPNNTCENSQSRN and TSDTKSDTATGGESAGHATSSQEPSGCS. The tract at residues 117-196 is disordered; that stretch reads SETSVANGSQ…SDQRPAEDLN (80 aa). In terms of domain architecture, UBX spans 315 to 393; the sequence is ERSTVARIQF…ELAPSASVVL (79 aa). An intramembrane segment occupies 414 to 434; that stretch reads LLGTVLYPFLAIWRLISNFLF. At 435–508 the chain is on the cytoplasmic side; that stretch reads SNPPPTQTSV…TWNGNSTQQM (74 aa). Residues 440 to 508 are disordered; it reads TQTSVRVTSS…TWNGNSTQQM (69 aa). Polar residues predominate over residues 441–458; the sequence is QTSVRVTSSEPPNPASSS. Positions 459-491 are enriched in basic and acidic residues; the sequence is KSEKREPVRKRVLEKRGDDFKKEGKIYRLRTQD. At threonine 489 the chain carries Phosphothreonine. Polar residues predominate over residues 498–508; it reads NTWNGNSTQQM.

Directly interacts with VCP. Interacts with UBQLN1. Forms a complex with VCP and UBQLN1. Expressed in many tissues, including heart, brain, placenta, lung, liver, skeletal muscle, kidney and pancreas. Accumulates in Alzheimer disease-afflicted brains (at protein level).

The protein resides in the endoplasmic reticulum membrane. The protein localises to the nucleus envelope. In terms of biological role, involved in endoplasmic reticulum-associated protein degradation (ERAD). Acts as a platform to recruit both UBQLN1 and VCP to the ER during ERAD. The polypeptide is UBX domain-containing protein 4 (UBXN4) (Homo sapiens (Human)).